Reading from the N-terminus, the 270-residue chain is Shikimate dehydrogenase (NADP(+)) (270 aa).

Shikimate is bound by residues 15-17 and T62; that span reads SLS. Residue K66 is the Proton acceptor of the active site. 2 residues coordinate shikimate: N87 and D102. Residues 126 to 130, 149 to 154, and I210 contribute to the NADP(+) site; these read GAGGS and NRTVGR. Y212 contributes to the shikimate binding site. G233 lines the NADP(+) pocket.

It belongs to the shikimate dehydrogenase family. In terms of assembly, homodimer.

It catalyses the reaction shikimate + NADP(+) = 3-dehydroshikimate + NADPH + H(+). It functions in the pathway metabolic intermediate biosynthesis; chorismate biosynthesis; chorismate from D-erythrose 4-phosphate and phosphoenolpyruvate: step 4/7. In terms of biological role, involved in the biosynthesis of the chorismate, which leads to the biosynthesis of aromatic amino acids. Catalyzes the reversible NADPH linked reduction of 3-dehydroshikimate (DHSA) to yield shikimate (SA). The sequence is that of Shikimate dehydrogenase (NADP(+)) from Hyphomonas neptunium (strain ATCC 15444).